The following is a 556-amino-acid chain: Genetic interactor of prohibitins 3, mitochondrial (556 aa).

The transit peptide at 1–21 (MLNLCHALRGVRQFSCSVIVK) directs the protein to the mitochondrion. Residues 113–305 (ESTLNDILNY…LFDLPGYSTS (193 aa)) form the CP-type G domain.

This sequence belongs to the TRAFAC class YlqF/YawG GTPase family. GEP3 subfamily.

It localises to the mitochondrion. Functionally, interacts genetically with prohibitins and thus may be involved in the mitochondrial lipid metabolism. The protein is Genetic interactor of prohibitins 3, mitochondrial (GEP3) of Saccharomyces cerevisiae (strain Zymaflore VL3) (Baker's yeast).